Reading from the N-terminus, the 53-residue chain is Small ribosomal subunit protein uS14 (53 aa).

Cysteine 17, cysteine 20, cysteine 36, and cysteine 39 together coordinate Zn(2+).

Belongs to the universal ribosomal protein uS14 family. Zinc-binding uS14 subfamily. In terms of assembly, part of the 30S ribosomal subunit. Zn(2+) is required as a cofactor.

Its function is as follows. Binds 16S rRNA, required for the assembly of 30S particles. The polypeptide is Small ribosomal subunit protein uS14 (Methanococcus maripaludis (strain DSM 14266 / JCM 13030 / NBRC 101832 / S2 / LL)).